The following is a 476-amino-acid chain: Cysteine--tRNA ligase (476 aa).

C29 serves as a coordination point for Zn(2+). The short motif at 31–41 (PTVYDYTHIGH) is the 'HIGH' region element. The Zn(2+) site is built by C209, H234, and E238. The short motif at 266–270 (KMSKS) is the 'KMSKS' region element. Residue K269 coordinates ATP.

Belongs to the class-I aminoacyl-tRNA synthetase family. It depends on Zn(2+) as a cofactor.

It localises to the cytoplasm. The catalysed reaction is tRNA(Cys) + L-cysteine + ATP = L-cysteinyl-tRNA(Cys) + AMP + diphosphate. This Thermococcus kodakarensis (strain ATCC BAA-918 / JCM 12380 / KOD1) (Pyrococcus kodakaraensis (strain KOD1)) protein is Cysteine--tRNA ligase.